The sequence spans 230 residues: Pyridoxal phosphate homeostasis protein (230 aa).

An N6-(pyridoxal phosphate)lysine modification is found at Lys-36.

Belongs to the pyridoxal phosphate-binding protein YggS/PROSC family.

Functionally, perhaps involved in proline biosynthesis. In terms of biological role, pyridoxal 5'-phosphate (PLP)-binding protein, which is involved in PLP homeostasis. The polypeptide is Pyridoxal phosphate homeostasis protein (Pseudomonas aeruginosa (strain ATCC 15692 / DSM 22644 / CIP 104116 / JCM 14847 / LMG 12228 / 1C / PRS 101 / PAO1)).